We begin with the raw amino-acid sequence, 361 residues long: Serine/threonine-protein kinase SRK2B (361 aa).

The Protein kinase domain maps to 4–260; it reads YELVKDIGAG…IGDIKKHPWF (257 aa). Residues 10 to 18 and K33 each bind ATP; that span reads IGAGNFGVA. Residue D123 is the Proton acceptor of the active site. At S154 the chain carries Phosphoserine. Residues 311-361 are disordered; the sequence is AFGWGGGEDAEGKEEDAEEEVEEVEEEEDEEDEYDKTVKQVHASMGEVRVS. Over residues 318–344 the composition is skewed to acidic residues; it reads EDAEGKEEDAEEEVEEVEEEEDEEDEY.

This sequence belongs to the protein kinase superfamily. Ser/Thr protein kinase family. As to expression, expressed in seedlings.

It carries out the reaction L-seryl-[protein] + ATP = O-phospho-L-seryl-[protein] + ADP + H(+). The catalysed reaction is L-threonyl-[protein] + ATP = O-phospho-L-threonyl-[protein] + ADP + H(+). The polypeptide is Serine/threonine-protein kinase SRK2B (SRK2B) (Arabidopsis thaliana (Mouse-ear cress)).